We begin with the raw amino-acid sequence, 160 residues long: MSKHPMTVEGAEALKEELHRLKFVDRPRIVEAIATARAHGDLKENAEYHAAREQQSFNEGRIQELEAKLSHAQIIDISKLPNNGKVIFGSTVTICHVATGSELTYKIVGEDEADIKLNKISYSSPIARALIGKELDDAVTVETPGGMVEYEIIQVQYIVE.

The stretch at 50–70 forms a coiled coil; the sequence is AAREQQSFNEGRIQELEAKLS.

This sequence belongs to the GreA/GreB family.

Necessary for efficient RNA polymerase transcription elongation past template-encoded arresting sites. The arresting sites in DNA have the property of trapping a certain fraction of elongating RNA polymerases that pass through, resulting in locked ternary complexes. Cleavage of the nascent transcript by cleavage factors such as GreA or GreB allows the resumption of elongation from the new 3'terminus. GreA releases sequences of 2 to 3 nucleotides. In Legionella pneumophila (strain Corby), this protein is Transcription elongation factor GreA.